Here is a 74-residue protein sequence, read N- to C-terminus: Defensin (74 aa).

An N-terminal signal peptide occupies residues 1–21; the sequence is MRGIYICLVFVLVCGLVSGLA. The propeptide occupies 22–34; the sequence is DVPAESEMAHLRV. 3 disulfides stabilise this stretch: Cys40–Cys61, Cys47–Cys69, and Cys51–Cys71.

In terms of tissue distribution, expressed in the hemocytes, fat body and ovaries.

The protein localises to the secreted. Functionally, antibacterial peptide mostly active against Gram-positive bacteria. The chain is Defensin from Rhipicephalus microplus (Cattle tick).